The sequence spans 208 residues: Large ribosomal subunit protein bL25 (208 aa).

This sequence belongs to the bacterial ribosomal protein bL25 family. CTC subfamily. In terms of assembly, part of the 50S ribosomal subunit; part of the 5S rRNA/L5/L18/L25 subcomplex. Contacts the 5S rRNA. Binds to the 5S rRNA independently of L5 and L18.

In terms of biological role, this is one of the proteins that binds to the 5S RNA in the ribosome where it forms part of the central protuberance. In Burkholderia pseudomallei (strain K96243), this protein is Large ribosomal subunit protein bL25.